The primary structure comprises 135 residues: Large ribosomal subunit protein bL17 (135 aa).

Belongs to the bacterial ribosomal protein bL17 family. Part of the 50S ribosomal subunit. Contacts protein L32.

The protein is Large ribosomal subunit protein bL17 of Listeria monocytogenes serotype 4b (strain CLIP80459).